The primary structure comprises 78 residues: Small ribosomal subunit protein bS16c (78 aa).

Belongs to the bacterial ribosomal protein bS16 family.

The protein localises to the plastid. It is found in the chloroplast. The protein is Small ribosomal subunit protein bS16c of Phaeodactylum tricornutum (strain CCAP 1055/1).